The following is a 625-amino-acid chain: Interleukin-1 receptor-associated kinase-like 2 (625 aa).

Positions 13–94 (LDDLCRNMDA…RAAQIILNWK (82 aa)) constitute a Death domain. The interval 111–181 (KPEKPLAASV…SSDSKDFSTS (71 aa)) is disordered. S144 is subject to Phosphoserine. The span at 169–181 (LPTSSDSKDFSTS) shows a compositional bias: polar residues. Residues 210–489 (FNQNRKISQG…LCLRRRNTSL (280 aa)) form the Protein kinase domain. ATP contacts are provided by residues 216–224 (ISQGTFADV), K237, and 337–340 (KSSN). Residues 510–540 (LPWSGLSEGTGSSSNTPEETDDVDNSSLDAS) form a disordered region. Residues 516-526 (SEGTGSSSNTP) show a composition bias toward polar residues.

This sequence belongs to the protein kinase superfamily. TKL Ser/Thr protein kinase family. Pelle subfamily. In terms of assembly, interacts with MYD88. IL-1 stimulation leads to the formation of a signaling complex which dissociates from the IL-1 receptor following the binding of PELI1. In terms of tissue distribution, expressed in spleen, thymus, prostate, lung, liver, skeletal muscle, kidney, pancreas and peripheral blood leukocytes.

Functionally, binds to the IL-1 type I receptor following IL-1 engagement, triggering intracellular signaling cascades leading to transcriptional up-regulation and mRNA stabilization. The protein is Interleukin-1 receptor-associated kinase-like 2 (IRAK2) of Homo sapiens (Human).